A 486-amino-acid chain; its full sequence is Ribulose bisphosphate carboxylase large chain (486 aa).

2 residues coordinate substrate: Asn-126 and Thr-176. Residue Lys-178 is the Proton acceptor of the active site. Lys-180 is a binding site for substrate. Mg(2+) contacts are provided by Lys-204, Asp-206, and Glu-207. An N6-carboxylysine modification is found at Lys-204. Residue His-296 is the Proton acceptor of the active site. The substrate site is built by Arg-297, His-329, and Ser-381.

Belongs to the RuBisCO large chain family. Type I subfamily. In terms of assembly, heterohexadecamer of 8 large chains and 8 small chains. The cofactor is Mg(2+).

The catalysed reaction is 2 (2R)-3-phosphoglycerate + 2 H(+) = D-ribulose 1,5-bisphosphate + CO2 + H2O. The enzyme catalyses D-ribulose 1,5-bisphosphate + O2 = 2-phosphoglycolate + (2R)-3-phosphoglycerate + 2 H(+). Its function is as follows. RuBisCO catalyzes two reactions: the carboxylation of D-ribulose 1,5-bisphosphate, the primary event in carbon dioxide fixation, as well as the oxidative fragmentation of the pentose substrate. Both reactions occur simultaneously and in competition at the same active site. The chain is Ribulose bisphosphate carboxylase large chain from Methylacidiphilum infernorum (isolate V4) (Methylokorus infernorum (strain V4)).